The sequence spans 238 residues: CD63 antigen (238 aa).

Residues Met1–Lys11 are Cytoplasmic-facing. A helical membrane pass occupies residues Phe12–Gly32. Over Val33 to Ser51 the chain is Extracellular. Residues Leu52–Cys72 traverse the membrane as a helical segment. Residues Cys73 to Cys81 lie on the Cytoplasmic side of the membrane. A helical membrane pass occupies residues Leu82–Ile102. At Ala103–Val203 the chain is on the extracellular side. Asn125, Asn130, Asn150, and Asn172 each carry an N-linked (GlcNAc...) asparagine glycan. The chain crosses the membrane as a helical span at residues Leu204 to Ala224. Over Cys225–Met238 the chain is Cytoplasmic. Residues Gly234–Met238 carry the Lysosomal targeting motif motif.

This sequence belongs to the tetraspanin (TM4SF) family. Interacts with TIMP1 and ITGB1 and recruits TIMP1 to ITGB1. Interacts with CD9. Identified in a complex with CD9 and ITGB3. Interacts with PMEL. Interacts with KDR/VEGFR2; identified in a complex with ITGB1 and KDR/VEGFR2 and is required to recruit KDR to ITGB1 complexes. Interacts with SYT7. Palmitoylated at a low, basal level in unstimulated platelets. The level of palmitoylation increases when platelets are activated by thrombin (in vitro).

The protein localises to the cell membrane. Its subcellular location is the lysosome membrane. The protein resides in the late endosome membrane. It is found in the endosome. It localises to the multivesicular body. The protein localises to the melanosome. Its subcellular location is the secreted. The protein resides in the extracellular exosome. It is found in the cell surface. In terms of biological role, functions as a cell surface receptor for TIMP1 and plays a role in the activation of cellular signaling cascades. Plays a role in the activation of ITGB1 and integrin signaling, leading to the activation of AKT, FAK/PTK2 and MAP kinases. Promotes cell survival, reorganization of the actin cytoskeleton, cell adhesion, spreading and migration, via its role in the activation of AKT and FAK/PTK2. Plays a role in VEGFA signaling via its role in regulating the internalization of KDR/VEGFR2. Plays a role in intracellular vesicular transport processes, and is required for normal trafficking of the PMEL luminal domain that is essential for the development and maturation of melanocytes. Plays a role in the adhesion of leukocytes onto endothelial cells via its role in the regulation of SELP trafficking. May play a role in mast cell degranulation in response to Ms4a2/FceRI stimulation, but not in mast cell degranulation in response to other stimuli. This is CD63 antigen (CD63) from Oryctolagus cuniculus (Rabbit).